The sequence spans 446 residues: Kynurenine 3-monooxygenase (446 aa).

It belongs to the aromatic-ring hydroxylase family. KMO subfamily. The cofactor is FAD.

It catalyses the reaction L-kynurenine + NADPH + O2 + H(+) = 3-hydroxy-L-kynurenine + NADP(+) + H2O. Its pathway is cofactor biosynthesis; NAD(+) biosynthesis; quinolinate from L-kynurenine: step 1/3. Catalyzes the hydroxylation of L-kynurenine (L-Kyn) to form 3-hydroxy-L-kynurenine (L-3OHKyn). Required for synthesis of quinolinic acid. The chain is Kynurenine 3-monooxygenase from Flavobacterium johnsoniae (strain ATCC 17061 / DSM 2064 / JCM 8514 / BCRC 14874 / CCUG 350202 / NBRC 14942 / NCIMB 11054 / UW101) (Cytophaga johnsonae).